A 180-amino-acid polypeptide reads, in one-letter code: Large ribosomal subunit protein uL18m (180 aa).

It belongs to the universal ribosomal protein uL18 family. Component of the mitochondrial ribosome large subunit (39S) which comprises a 16S rRNA and about 50 distinct proteins.

It is found in the mitochondrion. Functionally, together with thiosulfate sulfurtransferase (TST), acts as a mitochondrial import factor for the cytosolic 5S rRNA. The precursor form shows RNA chaperone activity; is able to fold the 5S rRNA into an import-competent conformation that is recognized by rhodanese (TST). Both the cytoplasmic and mitochondrial forms are able to bind to the helix IV-loop D in the gamma domain of the 5S rRNA. The chain is Large ribosomal subunit protein uL18m (Mrpl18) from Mus musculus (Mouse).